Reading from the N-terminus, the 139-residue chain is Natriuretic peptide Mf-NP (139 aa).

The first 25 residues, 1–25 (MVGLSRLTGGGLLLVLALLPLALDG), serve as a signal peptide directing secretion. The propeptide occupies 26 to 75 (KPLEEAPTAPSRIIPFSRPVRKESQAVLDPMVHPERPAGSGDDGDLSRLE). Residues Cys-86 and Cys-102 are joined by a disulfide bond. Residues 117–139 (IIPFSRPVRKESRAALDRMQHPG) constitute a propeptide that is removed on maturation.

Belongs to the natriuretic peptide family. Expressed by the venom gland.

Its subcellular location is the secreted. In terms of biological role, natriuretic peptide that dose-dependently induces the rapid relaxation of rat aortic strips phenylephrine-precontracted. Acts by stimulating cGMP production in a dose-dependent manner (by probably activating NPR1 and/or NPR2). May also show potent hypotensive effects. This chain is Natriuretic peptide Mf-NP, found in Micrurus fulvius (Eastern coral snake).